The sequence spans 1012 residues: DNA polymerase catalytic subunit (1012 aa).

This sequence belongs to the DNA polymerase type-B family.

It is found in the host nucleus. It catalyses the reaction DNA(n) + a 2'-deoxyribonucleoside 5'-triphosphate = DNA(n+1) + diphosphate. Functionally, replicates viral genomic DNA. This Human herpesvirus 6B (strain Z29) (HHV-6 variant B) protein is DNA polymerase catalytic subunit (U38).